The chain runs to 615 residues: Chaperone protein HscA (615 aa).

This sequence belongs to the heat shock protein 70 family.

Functionally, chaperone involved in the maturation of iron-sulfur cluster-containing proteins. Has a low intrinsic ATPase activity which is markedly stimulated by HscB. Involved in the maturation of IscU. The chain is Chaperone protein HscA from Xenorhabdus nematophila (strain ATCC 19061 / DSM 3370 / CCUG 14189 / LMG 1036 / NCIMB 9965 / AN6).